The following is a 460-amino-acid chain: Cysteine--tRNA ligase (460 aa).

Cys28 is a Zn(2+) binding site. The 'HIGH' region signature appears at 30–40; the sequence is MTVYDYCHLGH. Zn(2+) contacts are provided by Cys209, His234, and Glu238. The 'KMSKS' region signature appears at 266-270; the sequence is KMSKS. Residue Lys269 coordinates ATP.

The protein belongs to the class-I aminoacyl-tRNA synthetase family. In terms of assembly, monomer. Requires Zn(2+) as cofactor.

It is found in the cytoplasm. It carries out the reaction tRNA(Cys) + L-cysteine + ATP = L-cysteinyl-tRNA(Cys) + AMP + diphosphate. The polypeptide is Cysteine--tRNA ligase (Pseudomonas putida (strain ATCC 700007 / DSM 6899 / JCM 31910 / BCRC 17059 / LMG 24140 / F1)).